We begin with the raw amino-acid sequence, 323 residues long: Aldo-keto reductase family 1 member C2 (323 aa).

Residues 20 to 24 and aspartate 50 each bind NADP(+); that span reads GFGTY. Tyrosine 24 lines the substrate pocket. The active-site Proton donor is tyrosine 55. A substrate-binding site is contributed by histidine 117. NADP(+) contacts are provided by residues 166–167, glutamine 190, and 216–222; these read SN and YSALGSH. Histidine 222 and tryptophan 227 together coordinate substrate. An NADP(+)-binding site is contributed by 270 to 280; that stretch reads KSYNEQRIRQN.

This sequence belongs to the aldo/keto reductase family. Expressed in fetal testes. Expressed in fetal and adult adrenal glands.

Its subcellular location is the cytoplasm. The protein resides in the cytosol. The catalysed reaction is a 3alpha-hydroxysteroid + NADP(+) = a 3-oxosteroid + NADPH + H(+). The enzyme catalyses a 3alpha-hydroxysteroid + NAD(+) = a 3-oxosteroid + NADH + H(+). It catalyses the reaction 5alpha-androstane-3alpha,17beta-diol + NADP(+) = 17beta-hydroxy-5alpha-androstan-3-one + NADPH + H(+). It carries out the reaction 5alpha-androstane-3alpha,17beta-diol + NAD(+) = 17beta-hydroxy-5alpha-androstan-3-one + NADH + H(+). The catalysed reaction is 5alpha-androstane-3alpha,17beta-diol + NAD(+) = androsterone + NADH + H(+). The enzyme catalyses 17beta-estradiol + NADP(+) = estrone + NADPH + H(+). It catalyses the reaction 17beta-estradiol + NAD(+) = estrone + NADH + H(+). It carries out the reaction (20S)-hydroxypregn-4-en-3-one + NADP(+) = progesterone + NADPH + H(+). The catalysed reaction is (20S)-hydroxypregn-4-en-3-one + NAD(+) = progesterone + NADH + H(+). The enzyme catalyses androsterone + NADP(+) = 5alpha-androstan-3,17-dione + NADPH + H(+). It catalyses the reaction (3beta,5alpha,17beta)-3-hydroxy-androstan-17-yl sulfate + NADP(+) = 5alpha-dihydrotestosterone sulfate + NADPH + H(+). It carries out the reaction (1R,2R)-1,2-dihydrobenzene-1,2-diol + NADP(+) = catechol + NADPH + H(+). The catalysed reaction is (S)-indan-1-ol + NAD(+) = indan-1-one + NADH + H(+). The enzyme catalyses (S)-indan-1-ol + NADP(+) = indan-1-one + NADPH + H(+). It functions in the pathway steroid metabolism. With respect to regulation, inhibited by hexestrol with an IC(50) of 2.8 uM, 1,10-phenanthroline with an IC(50) of 2100 uM, 1,7-phenanthroline with an IC(50) of 1500 uM, flufenamic acid with an IC(50) of 0.9 uM, indomethacin with an IC(50) of 75 uM, ibuprofen with an IC(50) of 6.9 uM, lithocholic acid with an IC(50) of 0.07 uM, ursodeoxycholic acid with an IC(50) of 0.08 uM and chenodeoxycholic acid with an IC(50) of 0.13 uM. The oxidation reaction is inhibited by low micromolar concentrations of NADPH. In terms of biological role, cytosolic aldo-keto reductase that catalyzes the NADH and NADPH-dependent reduction of ketosteroids to hydroxysteroids. Most probably acts as a reductase in vivo since the oxidase activity measured in vitro is inhibited by physiological concentrations of NADPH. Displays a broad positional specificity acting on positions 3, 17 and 20 of steroids and regulates the metabolism of hormones like estrogens and androgens. Works in concert with the 5-alpha/5-beta-steroid reductases to convert steroid hormones into the 3-alpha/5-alpha and 3-alpha/5-beta-tetrahydrosteroids. Catalyzes the inactivation of the most potent androgen 5-alpha-dihydrotestosterone (5-alpha-DHT) to 5-alpha-androstane-3-alpha,17-beta-diol (3-alpha-diol). Also specifically able to produce 17beta-hydroxy-5alpha-androstan-3-one/5alphaDHT. May also reduce conjugated steroids such as 5alpha-dihydrotestosterone sulfate. Displays affinity for bile acids. The sequence is that of Aldo-keto reductase family 1 member C2 (AKR1C2) from Homo sapiens (Human).